The following is a 95-amino-acid chain: Neutrophil antibiotic peptide NP-5 (95 aa).

Positions 1 to 19 are cleaved as a signal peptide; that stretch reads MRTLALLAAILLVTLQAQA. The propeptide occupies 20 to 62; the sequence is ELHSGMADDGVDQQQPRAQDLDVAVYIKQDETSPLEVLGAKAG. 3 disulfide bridges follow: Cys-65/Cys-93, Cys-67/Cys-82, and Cys-72/Cys-92.

It belongs to the alpha-defensin family.

Its subcellular location is the secreted. Its function is as follows. Microbicidal activity. In Oryctolagus cuniculus (Rabbit), this protein is Neutrophil antibiotic peptide NP-5.